We begin with the raw amino-acid sequence, 237 residues long: MSTIHSCLDLIRSQIQQSANGRNVLLVAVSKFHPVETLMEAYNAGQRHFGENYMQEFLKKVELMPDDVQWHFIGSLQSSKCKKIASVKNLYSIETIDTEKKARLVNSAREALQLPLNVYIQVNTSGEENKGGVTPSKVLELCKQVQDMKYLRLKGLMTIGSISNSQLSDHNPDFQVLSDLRESLQNELGIPLQLSMGMSSDYLLAIKYGSDSVRVGSSIFGSRPTEKPSDVHISASK.

K31 is modified (N6-(pyridoxal phosphate)lysine).

The protein belongs to the pyridoxal phosphate-binding protein YggS/PROSC family.

It localises to the cytoplasm. The protein localises to the nucleus. In terms of biological role, pyridoxal 5'-phosphate (PLP)-binding protein, which may be involved in intracellular homeostatic regulation of pyridoxal 5'-phosphate (PLP), the active form of vitamin B6. The chain is Pyridoxal phosphate homeostasis protein from Schizosaccharomyces pombe (strain 972 / ATCC 24843) (Fission yeast).